The chain runs to 102 residues: NADH-quinone oxidoreductase subunit K (102 aa).

The next 3 membrane-spanning stretches (helical) occupy residues 5–25 (LSHFLIVAAMLFTIGVAGIIL), 30–50 (IIVVLMSVELILLSVNINLVS), and 62–82 (VFSLFVLTVAAAEAAIGLAIL).

It belongs to the complex I subunit 4L family. In terms of assembly, NDH-1 is composed of 14 different subunits. Subunits NuoA, H, J, K, L, M, N constitute the membrane sector of the complex.

It localises to the cell inner membrane. The enzyme catalyses a quinone + NADH + 5 H(+)(in) = a quinol + NAD(+) + 4 H(+)(out). In terms of biological role, NDH-1 shuttles electrons from NADH, via FMN and iron-sulfur (Fe-S) centers, to quinones in the respiratory chain. The immediate electron acceptor for the enzyme in this species is believed to be ubiquinone. Couples the redox reaction to proton translocation (for every two electrons transferred, four hydrogen ions are translocated across the cytoplasmic membrane), and thus conserves the redox energy in a proton gradient. This chain is NADH-quinone oxidoreductase subunit K, found in Methylocella silvestris (strain DSM 15510 / CIP 108128 / LMG 27833 / NCIMB 13906 / BL2).